Reading from the N-terminus, the 296-residue chain is Phosphatidylcholine:diacylglycerol cholinephosphotransferase 2 (296 aa).

The next 5 helical transmembrane spans lie at 83–103, 136–156, 165–182, 198–218, and 250–270; these read HWIPCLFAAGVMFFTVVEYTF, VLAALNTILVGMQTTYIGCTW, TIAALFMFTCRGILGYST, PVGNVSFFLFYSGHVAGSMIA, and GHYTIDIAVGVGAGILFDSLA. Residues His211, His251, and Asp255 contribute to the active site.

The protein belongs to the phosphatidylcholine:diacylglycerol cholinephosphotransferase family.

It localises to the membrane. Its function is as follows. Functions as a phosphatidylcholine:diacylglycerol cholinephosphotransferase that catalyzes the transfer of the phosphocholine headgroup from phosphatidylcholine (PC) to diacylglycerol, a major reaction for the transfer of 18:1 into phosphatidylcholine for desaturation and also for the reverse transfer of 18:2 and 18:3 into the triacylglycerols synthesis pathway. The protein is Phosphatidylcholine:diacylglycerol cholinephosphotransferase 2 of Arabidopsis thaliana (Mouse-ear cress).